A 78-amino-acid polypeptide reads, in one-letter code: Small ribosomal subunit protein bS16 (78 aa).

It belongs to the bacterial ribosomal protein bS16 family.

This chain is Small ribosomal subunit protein bS16, found in Thermodesulfovibrio yellowstonii (strain ATCC 51303 / DSM 11347 / YP87).